The sequence spans 634 residues: Beta-ketoacyl-[acyl-carrier-protein] synthase FabY (634 aa).

The Ketosynthase family 3 (KS3) domain occupies 78–546 (ERIFASTLVR…GNNASGVVLS (469 aa)). Residues Cys281, His434, and His472 each act as for beta-ketoacyl synthase activity in the active site.

This sequence belongs to the thiolase-like superfamily. Beta-ketoacyl-ACP synthases family. Homodimer.

It catalyses the reaction malonyl-[ACP] + acetyl-CoA + H(+) = 3-oxobutanoyl-[ACP] + CO2 + CoA. Its pathway is lipid metabolism; fatty acid biosynthesis. Functionally, involved in the initiation of the fatty acid biosynthesis. Catalyzes the condensation of acetyl coenzyme A (acetyl-CoA) with malonyl-acyl carrier protein (ACP) to make the fatty acid synthesis (FAS) primer beta-acetoacetyl-ACP. It can also use short-chain acyl-CoA as substrates, including butyryl-CoA, and hexanoyl-CoA, but does not use any of the longer chain acyl-CoA substrates. The chain is Beta-ketoacyl-[acyl-carrier-protein] synthase FabY (fabY) from Pseudomonas aeruginosa (strain ATCC 15692 / DSM 22644 / CIP 104116 / JCM 14847 / LMG 12228 / 1C / PRS 101 / PAO1).